Consider the following 74-residue polypeptide: ATP synthase F(1) complex subunit epsilon, mitochondrial (74 aa).

Belongs to the eukaryotic ATPase epsilon family. Component of the ATP synthase complex composed at least of ATP5F1A/subunit alpha, ATP5F1B/subunit beta, ATP5MC1/subunit c (homooctomer), MT-ATP6/subunit a, MT-ATP8/subunit 8, ATP5ME/subunit e, ATP5MF/subunit f, ATP5MG/subunit g, ATP5MK/subunit k, ATP5MJ/subunit j, ATP5F1C/subunit gamma, ATP5F1D/subunit delta, ATP5F1E/subunit epsilon, ATP5PF/subunit F6, ATP5PB/subunit b, ATP5PD/subunit d, ATP5PO/subunit OSCP. ATP synthase complex consists of a soluble F(1) head domain (subunits alpha(3) and beta(3)) - the catalytic core - and a membrane F(0) domain - the membrane proton channel (subunits c, a, 8, e, f, g, k and j). These two domains are linked by a central stalk (subunits gamma, delta, and epsilon) rotating inside the F1 region and a stationary peripheral stalk (subunits F6, b, d, and OSCP).

It localises to the mitochondrion. Its subcellular location is the mitochondrion inner membrane. Subunit epsilon, of the mitochondrial membrane ATP synthase complex (F(1)F(0) ATP synthase or Complex V) that produces ATP from ADP in the presence of a proton gradient across the membrane which is generated by electron transport complexes of the respiratory chain. ATP synthase complex consist of a soluble F(1) head domain - the catalytic core - and a membrane F(1) domain - the membrane proton channel. These two domains are linked by a central stalk rotating inside the F(1) region and a stationary peripheral stalk. During catalysis, ATP synthesis in the catalytic domain of F(1) is coupled via a rotary mechanism of the central stalk subunits to proton translocation. In vivo, can only synthesize ATP although its ATP hydrolase activity can be activated artificially in vitro. May be essential for the assembly of F(1) and may play an important role in the incorporation of the hydrophobic subunit c into the F(1)-c oligomer rotor of the mitochondrial ATP synthase complex. The sequence is that of ATP synthase F(1) complex subunit epsilon, mitochondrial from Dictyostelium discoideum (Social amoeba).